A 201-amino-acid polypeptide reads, in one-letter code: Histidine biosynthesis bifunctional protein HisIE (201 aa).

The interval 1–111 (MKINWQKVDN…EKTTQPDWIF (111 aa)) is phosphoribosyl-AMP cyclohydrolase. Residues 112-201 (LSKLERLIAS…IHKLKERHTK (90 aa)) are phosphoribosyl-ATP pyrophosphohydrolase.

This sequence in the N-terminal section; belongs to the PRA-CH family. It in the C-terminal section; belongs to the PRA-PH family.

The protein resides in the cytoplasm. It carries out the reaction 1-(5-phospho-beta-D-ribosyl)-ATP + H2O = 1-(5-phospho-beta-D-ribosyl)-5'-AMP + diphosphate + H(+). It catalyses the reaction 1-(5-phospho-beta-D-ribosyl)-5'-AMP + H2O = 1-(5-phospho-beta-D-ribosyl)-5-[(5-phospho-beta-D-ribosylamino)methylideneamino]imidazole-4-carboxamide. Its pathway is amino-acid biosynthesis; L-histidine biosynthesis; L-histidine from 5-phospho-alpha-D-ribose 1-diphosphate: step 2/9. It participates in amino-acid biosynthesis; L-histidine biosynthesis; L-histidine from 5-phospho-alpha-D-ribose 1-diphosphate: step 3/9. In Pasteurella multocida (strain Pm70), this protein is Histidine biosynthesis bifunctional protein HisIE (hisI).